The primary structure comprises 116 residues: Large ribosomal subunit protein uL22 (116 aa).

Belongs to the universal ribosomal protein uL22 family. As to quaternary structure, part of the 50S ribosomal subunit.

Its function is as follows. This protein binds specifically to 23S rRNA; its binding is stimulated by other ribosomal proteins, e.g. L4, L17, and L20. It is important during the early stages of 50S assembly. It makes multiple contacts with different domains of the 23S rRNA in the assembled 50S subunit and ribosome. Functionally, the globular domain of the protein is located near the polypeptide exit tunnel on the outside of the subunit, while an extended beta-hairpin is found that lines the wall of the exit tunnel in the center of the 70S ribosome. The polypeptide is Large ribosomal subunit protein uL22 (Orientia tsutsugamushi (strain Boryong) (Rickettsia tsutsugamushi)).